Consider the following 72-residue polypeptide: Crustacean hyperglycemic hormone (72 aa).

3 disulfides stabilise this stretch: C7/C43, C23/C39, and C26/C52. V72 carries the valine amide modification.

The protein localises to the secreted. Hormone found in the sinus gland of isopods and decapods which controls the blood sugar level. Has a secretagogue action over the amylase released from the midgut gland. May act as a stress hormone and may be involved in the control of molting and reproduction. This is Crustacean hyperglycemic hormone from Penaeus schmitti (White shrimp).